Reading from the N-terminus, the 277-residue chain is Sulfur carrier protein FdhD (277 aa).

The active-site Cysteine persulfide intermediate is cysteine 121. 260 to 265 (FCKPGR) contacts Mo-bis(molybdopterin guanine dinucleotide).

The protein belongs to the FdhD family.

It localises to the cytoplasm. Functionally, required for formate dehydrogenase (FDH) activity. Acts as a sulfur carrier protein that transfers sulfur from IscS to the molybdenum cofactor prior to its insertion into FDH. This Escherichia coli O6:K15:H31 (strain 536 / UPEC) protein is Sulfur carrier protein FdhD.